The chain runs to 229 residues: Large ribosomal subunit protein uL1 (229 aa).

Belongs to the universal ribosomal protein uL1 family. Part of the 50S ribosomal subunit.

Functionally, binds directly to 23S rRNA. The L1 stalk is quite mobile in the ribosome, and is involved in E site tRNA release. In terms of biological role, protein L1 is also a translational repressor protein, it controls the translation of the L11 operon by binding to its mRNA. This is Large ribosomal subunit protein uL1 from Streptococcus suis (strain 98HAH33).